The following is a 388-amino-acid chain: Sphingosine N-acyltransferase-like protein FUM17 (388 aa).

2 consecutive transmembrane segments (helical) span residues 60–80 (SWAL…IHPV) and 113–133 (LWDL…RKFI). Residue Asn-146 is glycosylated (N-linked (GlcNAc...) asparagine). In terms of domain architecture, TLC spans 151-368 (GKQQRFMEQM…LLRNAYRLLF (218 aa)). 4 helical membrane passes run 166 to 186 (FAVM…LWIF), 204 to 224 (IKFY…VLVL), 241 to 261 (IITI…IGIS), and 339 to 359 (FITF…LYCL).

Belongs to the sphingosine N-acyltransferase family.

It localises to the endoplasmic reticulum membrane. The protein operates within mycotoxin biosynthesis. Sphingosine N-acyltransferase-like protein; part of the gene cluster that mediates the biosynthesis of fumonisins B1 (FB1), B2 (FB2), B3 (FB3), and B4 (FB4), which are carcinogenic mycotoxins. May contribute to the biosynthesis of ceramide via interaction with Cer3. Does not confer resistance to FB1. The biosynthesis starts with the FUM1-catalyzed carbon chain assembly from one molecule of acetyl-CoA, eight molecules of malonyl-CoA, and two molecules of methionine (in S-adenosyl form). The C18 polyketide chain is released from the enzyme by a nucleophilic attack of a carbanion, which is derived from R-carbon of alanine by decarboxylation, on the carbonyl carbon of polyketide acyl chain. This step is catalyzed by the pyridoxal 5'-phosphate-dependent aminoacyl transferase FUM8. The resultant 3-keto intermediate is then stereospecifically reduced to a 3-hydroxyl product by reductase FUM13. Subsequent oxidations at C-10 by the cytochrome P450 monooxygenase FUM2, C-14 and C-15 by FUM6, FUM12 or FUM15, tricarballylic esterification of the hydroxyl groups on C-14 and C-15 by acyltransferase FUM14, and C-5 hydroxylation by 2-keto-glutarate-dependent dioxygenase FUM3 furnish the biosynthesis of fumonisins. The tricarballylic moieties are most likely derived from the citric acid cycle, and their addition to the carbon backbone may involve FUM7, FUM10, FUM11 and FUM14. The sequence is that of Sphingosine N-acyltransferase-like protein FUM17 from Gibberella moniliformis (strain M3125 / FGSC 7600) (Maize ear and stalk rot fungus).